The chain runs to 330 residues: DNA-directed RNA polymerase subunit alpha (330 aa).

Positions 1–225 are alpha N-terminal domain (alpha-NTD); sequence MSDLAIPTIS…KQFASLVSHS (225 aa). An alpha C-terminal domain (alpha-CTD) region spans residues 237-330; that stretch reads VKYTIPEEKY…KKKNKGIDED (94 aa).

This sequence belongs to the RNA polymerase alpha chain family. In terms of assembly, homodimer. The RNAP catalytic core consists of 2 alpha, 1 beta, 1 beta' and 1 omega subunit. When a sigma factor is associated with the core the holoenzyme is formed, which can initiate transcription.

The catalysed reaction is RNA(n) + a ribonucleoside 5'-triphosphate = RNA(n+1) + diphosphate. Functionally, DNA-dependent RNA polymerase catalyzes the transcription of DNA into RNA using the four ribonucleoside triphosphates as substrates. The chain is DNA-directed RNA polymerase subunit alpha from Dehalococcoides mccartyi (strain CBDB1).